Reading from the N-terminus, the 445-residue chain is KICSTOR subunit 2 (445 aa).

Belongs to the KICS2 family. In terms of assembly, part of the KICSTOR complex composed of KPTN, ITFG2, KICS2 and SZT2. SZT2 probably serves as a link between the other three proteins in the KICSTOR complex and may mediate the direct interaction with the GATOR complex via GATOR1. The KICSTOR complex interacts directly with the GATOR1 complex and most probably indirectly with the GATOR2 complex in an amino acid-independent manner.

Its subcellular location is the lysosome membrane. Functionally, as part of the KICSTOR complex functions in the amino acid-sensing branch of the TORC1 signaling pathway. Recruits, in an amino acid-independent manner, the GATOR1 complex to the lysosomal membranes and allows its interaction with GATOR2 and the RAG GTPases. Functions upstream of the RAG GTPases and is required to negatively regulate mTORC1 signaling in absence of amino acids. In absence of the KICSTOR complex mTORC1 is constitutively localized to the lysosome and activated. The KICSTOR complex is also probably involved in the regulation of mTORC1 by glucose. The polypeptide is KICSTOR subunit 2 (Mus musculus (Mouse)).